The primary structure comprises 185 residues: Ribosome-recycling factor (185 aa).

This sequence belongs to the RRF family.

Its subcellular location is the cytoplasm. In terms of biological role, responsible for the release of ribosomes from messenger RNA at the termination of protein biosynthesis. May increase the efficiency of translation by recycling ribosomes from one round of translation to another. The sequence is that of Ribosome-recycling factor from Campylobacter hominis (strain ATCC BAA-381 / DSM 21671 / CCUG 45161 / LMG 19568 / NCTC 13146 / CH001A).